The primary structure comprises 346 residues: MAGVSEAERRGHRKLVRFQARRAIGPIRPTSAAWDRDFDPAGKRIAVVGTDAAAAHYISRLSESAASVTVFTQAPRRVVTGVPLWTTRAKRWLRRRTGAEHPAVAWATAAIDALTSSGIRTSDGVEHPVDAIIYGTGFAIADQVGDQTLVGAGGVTIRQAWDDGMEPYLGVAVHGFPNYFFITGPDTAAQARCVVECMKLMERTASRRIEVRRSSQQVFNERAQLKPAQPHRQTGGLEAFDLSSAATEDDQTYDGAATLTLAGARFRVRVRLTGHLDPIDGNYHWQGTVFDSLPETSLTHARAATLTIGGRSAPARITEQTPWGTHSVAGVGPPPYARSGPASATT.

The disordered stretch occupies residues 321–346 (TPWGTHSVAGVGPPPYARSGPASATT).

This is an uncharacterized protein from Mycobacterium tuberculosis (strain CDC 1551 / Oshkosh).